The following is a 125-amino-acid chain: Large ribosomal subunit protein bL20 (125 aa).

It belongs to the bacterial ribosomal protein bL20 family.

Its function is as follows. Binds directly to 23S ribosomal RNA and is necessary for the in vitro assembly process of the 50S ribosomal subunit. It is not involved in the protein synthesizing functions of that subunit. This chain is Large ribosomal subunit protein bL20, found in Methylobacterium radiotolerans (strain ATCC 27329 / DSM 1819 / JCM 2831 / NBRC 15690 / NCIMB 10815 / 0-1).